The primary structure comprises 319 residues: Acetyl esterase (319 aa).

An Involved in the stabilization of the negatively charged intermediate by the formation of the oxyanion hole motif is present at residues 91 to 93 (HGG). Catalysis depends on residues S165, D262, and H292.

The protein belongs to the 'GDXG' lipolytic enzyme family. As to quaternary structure, homodimer. Interacts with MalT and MelA.

Its subcellular location is the cytoplasm. Functionally, displays esterase activity towards short chain fatty esters (acyl chain length of up to 8 carbons). Able to hydrolyze triacetylglycerol (triacetin) and tributyrylglycerol (tributyrin), but not trioleylglycerol (triolein) or cholesterol oleate. Negatively regulates MalT activity by antagonizing maltotriose binding. Inhibits MelA galactosidase activity. In Escherichia coli (strain 55989 / EAEC), this protein is Acetyl esterase.